The primary structure comprises 248 residues: NADH dehydrogenase [ubiquinone] flavoprotein 2, mitochondrial (248 aa).

Residues 1-31 constitute a mitochondrion transit peptide; it reads MFSLALRARASGLTAQWGRHARNLHKTAVQN. [2Fe-2S] cluster contacts are provided by C134, C139, C175, and C179. Residue Y192 is modified to Phosphotyrosine; by SRC. Residues 229–248 form a disordered region; sequence GLTSLTEPPKGPGFGVQAGL.

The protein belongs to the complex I 24 kDa subunit family. As to quaternary structure, core subunit of respiratory chain NADH dehydrogenase (Complex I) which is composed of 45 different subunits. This is a component of the flavoprotein-sulfur (FP) fragment of the enzyme. The cofactor is [2Fe-2S] cluster.

The protein localises to the mitochondrion inner membrane. The enzyme catalyses a ubiquinone + NADH + 5 H(+)(in) = a ubiquinol + NAD(+) + 4 H(+)(out). In terms of biological role, core subunit of the mitochondrial membrane respiratory chain NADH dehydrogenase (Complex I) which catalyzes electron transfer from NADH through the respiratory chain, using ubiquinone as an electron acceptor. Parts of the peripheral arm of the enzyme, where the electrons from NADH are accepted by flavin mononucleotide (FMN) and then passed along a chain of iron-sulfur clusters by electron tunnelling to the final acceptor ubiquinone. Contains one iron-sulfur cluster. The chain is NADH dehydrogenase [ubiquinone] flavoprotein 2, mitochondrial from Rattus norvegicus (Rat).